A 292-amino-acid chain; its full sequence is 11-beta-hydroxysteroid dehydrogenase 1 (292 aa).

The Cytoplasmic portion of the chain corresponds to 2–7 (HFMKKY). The chain crosses the membrane as a helical; Signal-anchor for type II membrane protein span at residues 8–24 (LLPILVLFLAYYYYSTK). Residues 25-292 (EEFRPEMLQG…SFTFDKLISS (268 aa)) lie on the Lumenal side of the membrane. NADP(+) is bound by residues 41-67 (GASK…TARS), 92-93 (TM), and 119-121 (NHI). A glycan (N-linked (GlcNAc...) asparagine) is linked at N162. S170 lines the substrate pocket. Y183 (proton acceptor) is an active-site residue. Position 183 to 187 (183 to 187 (YSASK)) interacts with NADP(+). An N-linked (GlcNAc...) asparagine glycan is attached at N207. 218 to 222 (INTET) is an NADP(+) binding site.

It belongs to the short-chain dehydrogenases/reductases (SDR) family. Homodimer. As to expression, detected in adrenal gland, liver, kidney, testis, and at lower levels in brain and lung (at protein level).

The protein resides in the endoplasmic reticulum membrane. The catalysed reaction is an 11beta-hydroxysteroid + NADP(+) = an 11-oxosteroid + NADPH + H(+). It carries out the reaction corticosterone + NADP(+) = 11-dehydrocorticosterone + NADPH + H(+). It catalyses the reaction a 7beta-hydroxysteroid + NADP(+) = a 7-oxosteroid + NADPH + H(+). The enzyme catalyses 7-oxocholesterol + NADPH + H(+) = 7beta-hydroxycholesterol + NADP(+). The catalysed reaction is 7-oxocholesterol + NADPH + H(+) = 7alpha-hydroxycholesterol + NADP(+). It carries out the reaction chenodeoxycholate + NADP(+) = 7-oxolithocholate + NADPH + H(+). It catalyses the reaction 7-oxolithocholate + NADPH + H(+) = ursodeoxycholate + NADP(+). The enzyme catalyses glycochenodeoxycholate + NADP(+) = 7-oxoglycolithocholate + NADPH + H(+). The catalysed reaction is taurochenodeoxycholate + NADP(+) = 7-oxotaurolithocholate + NADPH + H(+). It carries out the reaction tauroursodeoxycholate + NADP(+) = 7-oxotaurolithocholate + NADPH + H(+). It catalyses the reaction glycoursodeoxycholate + NADP(+) = 7-oxoglycolithocholate + NADPH + H(+). The enzyme catalyses 7-oxopregnenolone + NADPH + H(+) = 7beta-hydroxypregnenolone + NADP(+). The catalysed reaction is 3beta,7alpha-dihydroxyandrost-5-en-17-one + NADP(+) = 3beta-hydroxy-5-androstene-7,17-dione + NADPH + H(+). It carries out the reaction 3beta-hydroxy-5-androstene-7,17-dione + NADPH + H(+) = 3beta,7beta-dihydroxyandrost-5-en-17-one + NADP(+). It catalyses the reaction 3beta-hydroxy-5alpha-androstane-7,17-dione + NADPH + H(+) = 3beta,7beta-dihydroxy-5alpha-androstan-17-one + NADP(+). It functions in the pathway steroid metabolism. Its function is as follows. Controls the reversible conversion of biologically active glucocorticoids such as 11-dehydrocorticosterone to corticosterone in the presence of NADP(H). Participates in the corticosteroid receptor-mediated anti-inflammatory response, as well as metabolic and homeostatic processes. Bidirectional in vitro, predominantly functions as a reductase in vivo, thereby increasing the concentration of active glucocorticoids. It has broad substrate specificity, besides glucocorticoids, it accepts other steroid and sterol substrates. Interconverts 7-oxo- and 7-hydroxy-neurosteroids such as 7-oxopregnenolone and 7beta-hydroxypregnenolone, 7-oxodehydroepiandrosterone (3beta-hydroxy-5-androstene-7,17-dione) and 7beta-hydroxydehydroepiandrosterone (3beta,7beta-dihydroxyandrost-5-en-17-one), among others. Catalyzes reversibly the conversion of the major dietary oxysterol, 7-ketocholesterol (7-oxocholesterol), into the more polar 7-beta-hydroxycholesterol and 7-alpha-hhydroxycholesterol metabolites. 7-oxocholesterol is one of the most important oxysterols, it participates in several events such as induction of apoptosis, accumulation in atherosclerotic lesions, lipid peroxidation, and induction of foam cell formation. Mediates the 7-oxo reduction of 7-oxolithocholate mainly to chenodeoxycholate, and to a lesser extent to ursodeoxycholate, both in its free form and when conjugated to glycine or taurine, providing a link between glucocorticoid activation and bile acid metabolism. Catalyzes the synthesis of 7-beta-25-dihydroxycholesterol from 7-oxo-25-hydroxycholesterol in vitro, which acts as a ligand for the G-protein-coupled receptor (GPCR) Epstein-Barr virus-induced gene 2 (EBI2) and may thereby regulate immune cell migration. The sequence is that of 11-beta-hydroxysteroid dehydrogenase 1 (HSD11B1) from Mesocricetus auratus (Golden hamster).